Reading from the N-terminus, the 554-residue chain is Solute carrier family 22 member 1 (554 aa).

Residues 1–21 (MPTVDDVLEQVGEFGWFQKRT) lie on the Cytoplasmic side of the membrane. The helical transmembrane segment at 22 to 42 (FLFLCLISAILAPIYLGIVFL) threads the bilayer. Residues 43–149 (GFTPDHRCRS…LVCADAWKVD (107 aa)) lie on the Extracellular side of the membrane. Asn71 carries an N-linked (GlcNAc...) asparagine glycan. The chain crosses the membrane as a helical span at residues 150–170 (LFQSCVNLGFFLGSLGVGYIA). At 171–176 (DRFGRK) the chain is on the cytoplasmic side. The helical transmembrane segment at 177-197 (LCLLLTTLINAVSGVLTAVAP) threads the bilayer. Residues 198-206 (DYTSMLLFR) lie on the Extracellular side of the membrane. A helical membrane pass occupies residues 207-229 (LLQGLVSKGSWMSGYTLITEFVG). At 230–237 (SGYRRTVA) the chain is on the cytoplasmic side. The chain crosses the membrane as a helical span at residues 238–258 (ILYQVAFSVGLVALSGVAYAI). Over 259 to 262 (PNWR) the chain is Extracellular. The chain crosses the membrane as a helical span at residues 263-283 (WLQLTVSLPTFLCLFYYWCVP). The Proline-rich sequence motif lies at 283-287 (PESPR). Residues 284–347 (ESPRWLLSQK…FRTPNLRKHT (64 aa)) lie on the Cytoplasmic side of the membrane. Phosphoserine is present on Ser333. The helical transmembrane segment at 348–368 (FILMFLWFTCSVLYQGLILHM) threads the bilayer. Residues 369–374 (GATGGN) are Extracellular-facing. Residues 375-395 (VYLDFFYSSLVEFPAAFVILV) traverse the membrane as a helical segment. The Cytoplasmic segment spans residues 396–402 (TIDRVGR). A helical transmembrane segment spans residues 403 to 423 (IYPMAASNLAAGVASVILIFV). Topologically, residues 424 to 431 (PQDLHWLT) are extracellular. A helical membrane pass occupies residues 432–452 (IVLSCVGRMGATIVLQMICLV). Topologically, residues 453–464 (NAELYPTFVRNL) are cytoplasmic. The helical transmembrane segment at 465–485 (GVMVCSALCDVGGIITPFMVF) threads the bilayer. Topologically, residues 486–492 (RLMEVWQ) are extracellular. A helical membrane pass occupies residues 493 to 513 (PLPLIVFGVLGLLAGGMTLLL). Residues 514–554 (PETKGVALPETIEDAENLRRKAKPKESKIYLQVQTSELKGP) lie on the Cytoplasmic side of the membrane.

The protein belongs to the major facilitator (TC 2.A.1) superfamily. Organic cation transporter (TC 2.A.1.19) family. Phosphorylated. In terms of tissue distribution, expressed in kidney, liver and intestine.

Its subcellular location is the basolateral cell membrane. The protein localises to the apical cell membrane. It is found in the lateral cell membrane. It localises to the basal cell membrane. It catalyses the reaction 1-methylnicotinamide(out) = 1-methylnicotinamide(in). It carries out the reaction dopamine(out) = dopamine(in). The enzyme catalyses serotonin(out) = serotonin(in). The catalysed reaction is (R)-adrenaline(out) = (R)-adrenaline(in). It catalyses the reaction (R)-noradrenaline(out) = (R)-noradrenaline(in). It carries out the reaction histamine(out) = histamine(in). The enzyme catalyses guanidine(out) = guanidine(in). The catalysed reaction is choline(out) = choline(in). It catalyses the reaction acetylcholine(in) = acetylcholine(out). It carries out the reaction thiamine(in) = thiamine(out). The enzyme catalyses spermidine(in) = spermidine(out). The catalysed reaction is agmatine(out) = agmatine(in). It catalyses the reaction putrescine(out) = putrescine(in). It carries out the reaction (R)-carnitine(in) = (R)-carnitine(out). The enzyme catalyses O-isobutanoyl-(R)-carnitine(in) = O-isobutanoyl-(R)-carnitine(out). The catalysed reaction is O-acetyl-(R)-carnitine(in) = O-acetyl-(R)-carnitine(out). It catalyses the reaction O-3-hydroxybutanoyl-(R)-carnitine(in) = O-3-hydroxybutanoyl-(R)-carnitine(out). It carries out the reaction O-propanoyl-(R)-carnitine(in) = O-propanoyl-(R)-carnitine(out). The enzyme catalyses O-butanoyl-(R)-carnitine(in) = O-butanoyl-(R)-carnitine(out). The catalysed reaction is O-2-methylbutanoyl-(R)-carnitine(in) = O-2-methylbutanoyl-(R)-carnitine(out). It catalyses the reaction O-3-methylbutanoyl-(R)-carnitine(in) = O-3-methylbutanoyl-(R)-carnitine(out). It carries out the reaction O-hexanoyl-(R)-carnitine(in) = O-hexanoyl-(R)-carnitine(out). The enzyme catalyses L-histidyl-L-proline diketopiperazine(in) = L-histidyl-L-proline diketopiperazine(out). The catalysed reaction is (R)-salsolinol(in) = (R)-salsolinol(out). It catalyses the reaction prostaglandin F2alpha(out) = prostaglandin F2alpha(in). It carries out the reaction prostaglandin E2(out) = prostaglandin E2(in). With respect to regulation, phosphorylation of the transporter leads to changes in its substrate affinity, resulting in a regulation of the transport activity. In contrast with rat ortholog, ASP uptake is inhibited by protein kinase A (PKA) and C (PKC) activation. ASP uptake is also endogenously activated by calmodulin, the calmodulin-dependent kinase II and LCK tyrosine kinase. Inhibited by cGMP, most likely through a cGMP-binding protein that interacts with OCT1. In terms of biological role, electrogenic voltage-dependent transporter that mediates the transport of a variety of organic cations such as endogenous bioactive amines, cationic drugs and xenobiotics. Functions as a pH- and Na(+)-independent, bidirectional transporter. Cation cellular uptake or release is driven by the electrochemical potential (i.e. membrane potential and concentration gradient) and substrate selectivity. Hydrophobicity is a major requirement for recognition in polyvalent substrates and inhibitors. Primarily expressed in the basolateral membrane of hepatocytes and proximal tubules and involved in the uptake and disposition of cationic compounds from the blood by hepatic and renal clearance. Most likely functions as an uptake carrier in enterocytes contributing to the intestinal elimination of organic cations from the systemic circulation. Transports endogenous monoamines such as N-1-methylnicotinamide (NMN), guanidine, neurotransmitters dopamine, serotonin, noradrenaline, adrenaline and histamine, and quaternary ammonium compound such as choline. Also transports natural polyamines such as spermidine, agmatine and putrescine at low affinity, but relatively high turnover. Involved in the hepatic and intestinal uptake of the vitamin B1/thiamine, hence regulating hepatic lipid and energy metabolism. Contributes to the influx and efflux of fatty acid carriers carnitines and acylcarnitines across the basolateral membrane of hepatocytes, from the liver to the systemic circulation and inversely and may be involved in regulating the systemic availability of hepatic acylcarnitines. Also capable of transporting non-amine endogenous compounds such as prostaglandin E2 (PGE2) and prostaglandin F2-alpha (PGF2-alpha). May contribute to the transport of cationic compounds in testes across the blood-testis-barrier. Also mediates the uptake of xenobiotics tributylmethylammonium (TBuMA), quinidine, N-methyl-quinine (NMQ), N-methyl-quinidine (NMQD) N-(4,4-azo-n-pentyl)-quinuclidine (APQ), azidoprocainamide methoiodide (AMP), N-(4,4-azo-n-pentyl)-21-deoxyajmalinium (APDA) and 4-(4-(dimethylamino)styryl)-N-methylpyridinium (ASP). In Oryctolagus cuniculus (Rabbit), this protein is Solute carrier family 22 member 1 (SLC22A1).